The sequence spans 1533 residues: DNA topoisomerase 2-alpha (1533 aa).

Met-1 is subject to N-acetylmethionine. The interval 1–22 (MEVSPLQPVNENMQVNKTKKNE) is disordered. Ser-4 carries the post-translational modification Phosphoserine. Residues 7 to 16 (QPVNENMQVN) show a composition bias toward polar residues. Residue Lys-17 forms a Glycyl lysine isopeptide (Lys-Gly) (interchain with G-Cter in SUMO2) linkage. Residues Asn-91, Asn-120, and 148–150 (SSN) each bind ATP. Glycyl lysine isopeptide (Lys-Gly) (interchain with G-Cter in SUMO2) cross-links involve residues Lys-156 and Lys-157. 161 to 168 (GRNGYGAK) serves as a coordination point for ATP. Lys-261 is covalently cross-linked (Glycyl lysine isopeptide (Lys-Gly) (interchain with G-Cter in SUMO2)). Position 282 is a phosphothreonine (Thr-282). The interaction with DNA stretch occupies residues 342–344 (KKK). Lys-352 is covalently cross-linked (Glycyl lysine isopeptide (Lys-Gly) (interchain with G-Cter in SUMO2)). 376–378 (QTK) provides a ligand contact to ATP. Residues Lys-386, Lys-397, Lys-416, Lys-418, Lys-425, and Lys-440 each participate in a glycyl lysine isopeptide (Lys-Gly) (interchain with G-Cter in SUMO2) cross-link. Positions 455–572 (CTLILTEGDS…SLLRHRFLEE (118 aa)) constitute a Toprim domain. Position 461 (Glu-461) interacts with Mg(2+). Residues Lys-466, Lys-480, and Lys-529 each participate in a glycyl lysine isopeptide (Lys-Gly) (interchain with G-Cter in SUMO2) cross-link. The Mg(2+) site is built by Asp-541 and Asp-543. Residues Lys-584, Lys-599, Lys-614, Lys-622, Lys-625, Lys-632, Lys-639, Lys-655, Lys-662, and Lys-676 each participate in a glycyl lysine isopeptide (Lys-Gly) (interchain with G-Cter in SUMO2) cross-link. The 457-residue stretch at 715–1171 (IPSMVDGLKP…SPSDLWKEDL (457 aa)) folds into the Topo IIA-type catalytic domain. Tyr-805 (O-(5'-phospho-DNA)-tyrosine intermediate) is an active-site residue. An interaction with DNA region spans residues 990-999 (KLQTSLTCNS). Lys-1075 participates in a covalent cross-link: Glycyl lysine isopeptide (Lys-Gly) (interchain with G-Cter in SUMO2). Disordered stretches follow at residues 1090 to 1121 (WKEA…VADS) and 1183 to 1215 (AKEK…PSPC). Acidic residues predominate over residues 1099–1108 (DEEENEESDN). The residue at position 1106 (Ser-1106) is a Phosphoserine; by CK1. Glycyl lysine isopeptide (Lys-Gly) (interchain with G-Cter in SUMO2) cross-links involve residues Lys-1114, Lys-1196, and Lys-1204. Position 1205 is a phosphothreonine (Thr-1205). Ser-1213 is modified (phosphoserine). A Glycyl lysine isopeptide (Lys-Gly) (interchain with G-Cter in SUMO2) cross-link involves residue Lys-1228. Positions 1231 to 1533 (AEKKIKKKIK…LEESDEDDLF (303 aa)) are disordered. Lys-1240 participates in a covalent cross-link: Glycyl lysine isopeptide (Lys-Gly) (interchain with G-Cter in SUMO1); alternate. Residue Lys-1240 forms a Glycyl lysine isopeptide (Lys-Gly) (interchain with G-Cter in SUMO2); alternate linkage. At Thr-1244 the chain carries Phosphothreonine. The residue at position 1247 (Ser-1247) is a Phosphoserine. Over residues 1256–1272 (EGLKQRLEKKQKREPGT) the composition is skewed to basic and acidic residues. Glycyl lysine isopeptide (Lys-Gly) (interchain with G-Cter in SUMO2) cross-links involve residues Lys-1259, Lys-1276, Lys-1283, and Lys-1286. Ser-1295, Ser-1297, Ser-1299, and Ser-1302 each carry phosphoserine. Residue Thr-1327 is modified to Phosphothreonine. Phosphoserine is present on residues Ser-1332 and Ser-1337. The residue at position 1343 (Thr-1343) is a Phosphothreonine. A phosphoserine mark is found at Ser-1351 and Ser-1354. The span at 1360 to 1371 (TSPKHTNKEPKP) shows a compositional bias: basic and acidic residues. Glycyl lysine isopeptide (Lys-Gly) (interchain with G-Cter in SUMO2) cross-links involve residues Lys-1363, Lys-1367, and Lys-1373. Residues Ser-1374 and Ser-1377 each carry the phosphoserine modification. Residue Lys-1387 forms a Glycyl lysine isopeptide (Lys-Gly) (interchain with G-Cter in SUMO2) linkage. Residues Ser-1393 and Ser-1395 each carry the phosphoserine modification. Over residues 1409 to 1433 (KPVSKKNVTVKKTAAKSQSSTSTTG) the composition is skewed to low complexity. Residue Lys-1424 forms a Glycyl lysine isopeptide (Lys-Gly) (interchain with G-Cter in SUMO2); alternate linkage. An N6-acetyllysine; alternate modification is found at Lys-1424. Residues 1435–1441 (KKRAAPK) are interaction with PLSCR1. Basic and acidic residues predominate over residues 1443–1455 (AKKDPDLDSDVSK). A Glycyl lysine isopeptide (Lys-Gly) (interchain with G-Cter in SUMO2); alternate cross-link involves residue Lys-1444. An N6-acetyllysine; alternate modification is found at Lys-1444. Residue Ser-1451 is modified to Phosphoserine. Residues Lys-1456 and Lys-1461 each participate in a glycyl lysine isopeptide (Lys-Gly) (interchain with G-Cter in SUMO2) cross-link. The residue at position 1471 (Ser-1471) is a Phosphoserine. Residue Thr-1472 is modified to Phosphothreonine. Ser-1473, Ser-1476, and Ser-1478 each carry phosphoserine. Glycyl lysine isopeptide (Lys-Gly) (interchain with G-Cter in SUMO2) cross-links involve residues Lys-1486 and Lys-1494. Positions 1493 to 1504 (PKGESDDFHLDL) are enriched in basic and acidic residues. Phosphoserine occurs at positions 1497 and 1527.

It belongs to the type II topoisomerase family. As to quaternary structure, homodimer. Interacts with COPS5. Interacts with RECQL5; this stimulates DNA decatenation. Interacts with SETMAR; stimulates the topoisomerase activity. Interacts with DHX9; this interaction occurs in a E2 enzyme UBE2I- and RNA-dependent manner, negatively regulates DHX9-mediated double-stranded DNA and RNA duplex helicase activity and stimulates TOP2A-mediated supercoiled DNA relaxation activity. Interacts with HNRNPU (via C-terminus); this interaction protects the topoisomerase TOP2A from degradation and positively regulates the relaxation of supercoiled DNA in a RNA-dependent manner. Interacts with MCM3AP. Interacts with ERCC6. Interacts with PLSCR1. Interacts with GCNA; this interaction allows the resolution of topoisomerase II (TOP2A) DNA-protein cross-links. Interacts with POL1RA/RPA1 (via dock II) and UBTF in the context of Pol I complex; may assist Pol I transcription initiation by releasing supercoils occurring during DNA unwinding. Interacts with TPRN; TPRN interacts with a number of DNA damage response proteins, is recruited to sites of DNA damage and may play a role in DNA damage repair. Mg(2+) is required as a cofactor. It depends on Mn(2+) as a cofactor. Ca(2+) serves as cofactor. Phosphorylation has no effect on catalytic activity. However, phosphorylation at Ser-1106 by CSNK1D/CK1 promotes DNA cleavable complex formation.

It localises to the cytoplasm. It is found in the nucleus. The protein localises to the nucleoplasm. The protein resides in the nucleolus. The enzyme catalyses ATP-dependent breakage, passage and rejoining of double-stranded DNA.. Its function is as follows. Key decatenating enzyme that alters DNA topology by binding to two double-stranded DNA molecules, generating a double-stranded break in one of the strands, passing the intact strand through the broken strand, and religating the broken strand. May play a role in regulating the period length of BMAL1 transcriptional oscillation. This Sus scrofa (Pig) protein is DNA topoisomerase 2-alpha (TOP2A).